The chain runs to 96 residues: Large ribosomal subunit protein uL15 (96 aa).

Belongs to the universal ribosomal protein uL15 family. Part of the 50S ribosomal subunit.

In terms of biological role, binds to the 23S rRNA. This Streptomyces scabiei protein is Large ribosomal subunit protein uL15 (rplO).